The primary structure comprises 446 residues: Tryptophan dimethylallyltransferase (446 aa).

Residues 83–84 (IL) and E92 contribute to the L-tryptophan site. R103, K189, and Y191 together coordinate substrate. L-tryptophan-binding residues include Y193 and R246. Positions 259, 261, 263, 345, and 347 each coordinate substrate.

Belongs to the tryptophan dimethylallyltransferase family. Homodimer.

The catalysed reaction is L-tryptophan + dimethylallyl diphosphate = 4-(3-methylbut-2-enyl)-L-tryptophan + diphosphate. Its pathway is alkaloid biosynthesis; ergot alkaloid biosynthesis. In terms of biological role, tryptophan dimethylallyltransferase; part of the gene cluster that mediates the biosynthesis of fungal ergot alkaloid. DmaW catalyzes the first step of ergot alkaloid biosynthesis by condensing dimethylallyl diphosphate (DMAP) and tryptophan to form 4-dimethylallyl-L-tryptophan. The second step is catalyzed by the methyltransferase easF that methylates 4-dimethylallyl-L-tryptophan in the presence of S-adenosyl-L-methionine, resulting in the formation of 4-dimethylallyl-L-abrine. The catalase easC and the FAD-dependent oxidoreductase easE then transform 4-dimethylallyl-L-abrine to chanoclavine-I which is further oxidized by easD in the presence of NAD(+), resulting in the formation of chanoclavine-I aldehyde. Chanoclavine-I aldehyde is the precursor of ergoamides and ergopeptines in Clavicipitaceae, and clavine-type alcaloids such as fumiclavine in Trichocomaceae. However, the metabolites downstream of chanoclavine-I aldehyde in Arthrodermataceae have not been identified yet. The chain is Tryptophan dimethylallyltransferase from Arthroderma otae (strain ATCC MYA-4605 / CBS 113480) (Microsporum canis).